A 176-amino-acid polypeptide reads, in one-letter code: ATP-dependent protease subunit HslV (176 aa).

Residue T5 is part of the active site. Residues A161, C164, and T167 each contribute to the Na(+) site.

It belongs to the peptidase T1B family. HslV subfamily. As to quaternary structure, a double ring-shaped homohexamer of HslV is capped on each side by a ring-shaped HslU homohexamer. The assembly of the HslU/HslV complex is dependent on binding of ATP.

The protein resides in the cytoplasm. It catalyses the reaction ATP-dependent cleavage of peptide bonds with broad specificity.. With respect to regulation, allosterically activated by HslU binding. Functionally, protease subunit of a proteasome-like degradation complex believed to be a general protein degrading machinery. The chain is ATP-dependent protease subunit HslV from Caldicellulosiruptor saccharolyticus (strain ATCC 43494 / DSM 8903 / Tp8T 6331).